The sequence spans 1664 residues: DNA-directed RNA polymerase I subunit RPA190 (1664 aa).

The Zn(2+) site is built by Cys62, Cys65, Cys72, His75, Cys102, Cys105, Cys233, and Cys236. The tract at residues 280–310 (QAKKLDGSNEASANDEESFDVGRNPTTRPKT) is disordered. Mg(2+) contacts are provided by Asp627, Asp629, and Asp631. Residue Ser889 is modified to Phosphoserine. Positions 992-1004 (PQEYYFHCMAGRE) are bridging helix. A disordered region spans residues 1343-1423 (DIGVAVPRLQ…DSDSEDEDVD (81 aa)). Residues 1393 to 1414 (ETMREAEKSSDEEGIDSDKESD) show a composition bias toward basic and acidic residues. A Phosphoserine modification is found at Ser1636.

Belongs to the RNA polymerase beta' chain family. As to quaternary structure, component of the RNA polymerase I (Pol I) complex consisting of 14 subunits: RPA135, RPA190, RPC40, RPA14, RPB5, RPO26, RPA43, RPB8, RPA12, RPB10, RPC19, RPC10, RPA49 and RPA34. The complex is composed of a horseshoe-shaped core containing ten subunits (RPA135, RPA190, RPB5, RPO26, RPB8, RPB10, RPC10, RPA12, RPC19 and RPC40) where RPA135 and RPA190 form the DNA-binding cleft. Outside of the core, RPA14 and RPA43 form the stalk that mediates interactions with transcription initiation factors and newly synthesized RNA.

It is found in the nucleus. Its subcellular location is the nucleolus. The enzyme catalyses RNA(n) + a ribonucleoside 5'-triphosphate = RNA(n+1) + diphosphate. In terms of biological role, DNA-dependent RNA polymerases catalyze the transcription of DNA into RNA using the four ribonucleoside triphosphates as substrates. Component of RNA polymerase I (Pol I) which synthesizes ribosomal RNA precursors. Besides, RNA polymerase I has intrinsic RNA cleavage activity. RPA190 and RPA135 both contribute to the polymerase catalytic activity and together form the Pol I active center. In addition, subunit RPA12 contributes a catalytic zinc ribbon that is required for RNA cleavage by Pol I. A single stranded DNA template strand of the promoter is positioned within the central active site cleft of Pol I. A bridging helix emanates from RPA190 and crosses the cleft near the catalytic site and is thought to promote translocation of Pol I by acting as a ratchet that moves the RNA-DNA hybrid through the active site by switching from straight to bent conformations at each step of nucleotide addition. In Saccharomyces cerevisiae (strain ATCC 204508 / S288c) (Baker's yeast), this protein is DNA-directed RNA polymerase I subunit RPA190 (RPA190).